A 310-amino-acid polypeptide reads, in one-letter code: Putative S-adenosyl-L-methionine-dependent methyltransferase MAP_2076c (310 aa).

Residues aspartate 131 and 160–161 (DL) contribute to the S-adenosyl-L-methionine site.

The protein belongs to the UPF0677 family.

In terms of biological role, exhibits S-adenosyl-L-methionine-dependent methyltransferase activity. In Mycolicibacterium paratuberculosis (strain ATCC BAA-968 / K-10) (Mycobacterium paratuberculosis), this protein is Putative S-adenosyl-L-methionine-dependent methyltransferase MAP_2076c.